A 62-amino-acid chain; its full sequence is DNA-directed RNA polymerase subunit Rpo10 (62 aa).

Cys-6, Cys-9, Cys-43, and Cys-44 together coordinate Zn(2+).

Belongs to the archaeal Rpo10/eukaryotic RPB10 RNA polymerase subunit family. In terms of assembly, part of the RNA polymerase complex. The cofactor is Zn(2+).

The protein localises to the cytoplasm. The enzyme catalyses RNA(n) + a ribonucleoside 5'-triphosphate = RNA(n+1) + diphosphate. Functionally, DNA-dependent RNA polymerase (RNAP) catalyzes the transcription of DNA into RNA using the four ribonucleoside triphosphates as substrates. This chain is DNA-directed RNA polymerase subunit Rpo10, found in Methanococcoides burtonii (strain DSM 6242 / NBRC 107633 / OCM 468 / ACE-M).